The following is a 340-amino-acid chain: Phenylalanine--tRNA ligase alpha subunit (340 aa).

E255 lines the Mg(2+) pocket.

The protein belongs to the class-II aminoacyl-tRNA synthetase family. Phe-tRNA synthetase alpha subunit type 1 subfamily. In terms of assembly, tetramer of two alpha and two beta subunits. It depends on Mg(2+) as a cofactor.

It is found in the cytoplasm. The catalysed reaction is tRNA(Phe) + L-phenylalanine + ATP = L-phenylalanyl-tRNA(Phe) + AMP + diphosphate + H(+). This chain is Phenylalanine--tRNA ligase alpha subunit, found in Heliobacterium modesticaldum (strain ATCC 51547 / Ice1).